A 459-amino-acid polypeptide reads, in one-letter code: Glycosyl hydrolase family 109 protein 1 (459 aa).

The segment at residues 1–31 (MHNIHRRHFLKAAGAVTAGLVTANIALNANA) is a signal peptide (tat-type signal). NAD(+) contacts are provided by residues 64 to 65 (ER), Asp-86, 135 to 138 (WEWH), 155 to 156 (EV), and Asn-184. Substrate contacts are provided by residues Tyr-213, Arg-232, 244–247 (YPTH), and Tyr-326. Position 244 (Tyr-244) interacts with NAD(+).

The protein belongs to the Gfo/Idh/MocA family. Glycosyl hydrolase 109 subfamily. Requires NAD(+) as cofactor. Post-translationally, predicted to be exported by the Tat system. The position of the signal peptide cleavage has not been experimentally proven.

Glycosidase. The polypeptide is Glycosyl hydrolase family 109 protein 1 (Shewanella sp. (strain MR-4)).